The following is a 137-amino-acid chain: Large-conductance mechanosensitive channel (137 aa).

4 helical membrane-spanning segments follow: residues 9–29 (AFAV…GAAF), 32–52 (IVSS…IGGV), 54–74 (FGDL…VVLA), and 79–99 (IQSI…VKVI).

The protein belongs to the MscL family. Homopentamer.

The protein localises to the cell inner membrane. Channel that opens in response to stretch forces in the membrane lipid bilayer. May participate in the regulation of osmotic pressure changes within the cell. In Pseudomonas fluorescens (strain ATCC BAA-477 / NRRL B-23932 / Pf-5), this protein is Large-conductance mechanosensitive channel.